Consider the following 441-residue polypeptide: Proline--tRNA ligase (441 aa).

It belongs to the class-II aminoacyl-tRNA synthetase family. ProS type 2 subfamily. Homodimer.

The protein localises to the cytoplasm. It catalyses the reaction tRNA(Pro) + L-proline + ATP = L-prolyl-tRNA(Pro) + AMP + diphosphate. Catalyzes the attachment of proline to tRNA(Pro) in a two-step reaction: proline is first activated by ATP to form Pro-AMP and then transferred to the acceptor end of tRNA(Pro). The chain is Proline--tRNA ligase from Afipia carboxidovorans (strain ATCC 49405 / DSM 1227 / KCTC 32145 / OM5) (Oligotropha carboxidovorans).